We begin with the raw amino-acid sequence, 295 residues long: Nucleotide-binding protein YjiE (295 aa).

Residue Gly-12–Thr-19 coordinates ATP. Residue Asp-63–Ser-66 coordinates GTP.

It belongs to the RapZ-like family.

Its function is as follows. Displays ATPase and GTPase activities. This chain is Nucleotide-binding protein YjiE (yjiE), found in Lactococcus lactis subsp. lactis (strain IL1403) (Streptococcus lactis).